The chain runs to 219 residues: Large ribosomal subunit protein uL3 (219 aa).

Residues 133–145 are compositionally biased toward polar residues; it reads GRASHGNSRSHNV. The disordered stretch occupies residues 133–153; that stretch reads GRASHGNSRSHNVPGSIGMAQ. An N5-methylglutamine modification is found at Gln-153.

Belongs to the universal ribosomal protein uL3 family. In terms of assembly, part of the 50S ribosomal subunit. Forms a cluster with proteins L14 and L19. Post-translationally, methylated by PrmB.

Its function is as follows. One of the primary rRNA binding proteins, it binds directly near the 3'-end of the 23S rRNA, where it nucleates assembly of the 50S subunit. The sequence is that of Large ribosomal subunit protein uL3 from Paraburkholderia phymatum (strain DSM 17167 / CIP 108236 / LMG 21445 / STM815) (Burkholderia phymatum).